We begin with the raw amino-acid sequence, 228 residues long: UPF0758 protein CLB_3028 (228 aa).

In terms of domain architecture, MPN spans 106 to 228 (KISTPLDVSN…YVSMKEKGTI (123 aa)). Residues histidine 177, histidine 179, and aspartate 190 each contribute to the Zn(2+) site. A JAMM motif motif is present at residues 177 to 190 (HNHPSGDPTPSKED).

The protein belongs to the UPF0758 family.

The protein is UPF0758 protein CLB_3028 of Clostridium botulinum (strain ATCC 19397 / Type A).